The primary structure comprises 843 residues: General transcription and DNA repair factor IIH helicase/translocase subunit XPB/SSL2 (843 aa).

Residues 1-85 form a disordered region; that stretch reads MTDVEGYQPK…TAADSSMNQM (85 aa). A compositionally biased stretch (acidic residues) spans 26–41; the sequence is SDEDSPATDAEIDENY. Residues 42–56 are compositionally biased toward basic and acidic residues; sequence DDNRETSEGRGERDT. The segment covering 64–74 has biased composition (basic residues); the sequence is KKPRKKTKSSR. The short motif at 64 to 75 is the Nuclear localization signal element; that stretch reads KKPRKKTKSSRH. The 163-residue stretch at 373–535 folds into the Helicase ATP-binding domain; sequence MFGNGRARSG…DLNFLIGPKL (163 aa). 386–393 lines the ATP pocket; sequence LPCGAGKT. Positions 488-491 match the DEAH box motif; it reads DEVH. The 155-residue stretch at 589–743 folds into the Helicase C-terminal domain; that stretch reads QACQFLIQYH…KVITHLHGME (155 aa). At Ser752 the chain carries Phosphoserine.

This sequence belongs to the helicase family. RAD25/XPB subfamily. As to quaternary structure, component of the 7-subunit TFIIH core complex composed of XPB/SSL2, XPD/RAD3, SSL1, TFB1, TFB2, TFB4 and TFB5, which is active in NER. The core complex associates with the 3-subunit CTD-kinase module TFIIK composed of CCL1, KIN28 and TFB3 to form the 10-subunit holoenzyme (holo-TFIIH) active in transcription. An additionnal subunit, TFB6, plays a role in the dissociation of the SSL2 helicase from TFIIH after transcription initiation. Interacts directly with TFB6. The cofactor is Mg(2+).

It localises to the nucleus. It carries out the reaction Couples ATP hydrolysis with the unwinding of duplex DNA by translocating in the 3'-5' direction.. It catalyses the reaction ATP + H2O = ADP + phosphate + H(+). ATP-dependent DNA translocase. Component of the general transcription and DNA repair factor IIH (TFIIH) core complex. When complexed to CDK-activating kinase (CAK), involved in RNA transcription by RNA polymerase II. May have 3'-5' helicase activity alone, the TFIIH core however has no 3'-5' helicase activity. Also involved in transcription-coupled nucleotide excision repair (NER) of damaged DNA. In NER, TFIIH acts by opening DNA around the lesion to allow the excision of the damaged oligonucleotide and its replacement by a new DNA fragment. The ATPase activity of XPB/SSL2, but not its helicase activity, is required for DNA opening. In transcription, TFIIH has an essential role in transcription initiation. When the pre-initiation complex (PIC) has been established, TFIIH is required for promoter opening and promoter escape. The ATP-dependent helicase activity of XPB/SSL2 is required for promoter opening and promoter escape. XPB/SSL2 acts as a double-stranded DNA translocase, promoting DNA opening by tracking in a 5'-3' dirction along the nontemplate promoter strand, rotating and inserting DNA into the Pol II active site cleft, leading to DNA unwinding. A dsDNA-stimulated ATPase, dATP and ATP are equally good substrates. May also use this translocase mechanism during DNA repair rather than physically wedging open damaged DNA. The protein is General transcription and DNA repair factor IIH helicase/translocase subunit XPB/SSL2 of Saccharomyces cerevisiae (strain ATCC 204508 / S288c) (Baker's yeast).